Here is a 262-residue protein sequence, read N- to C-terminus: Global transcriptional regulator CodY (262 aa).

The segment at 1–159 (MAHLLEKTRK…ASTVVGIQLL (159 aa)) is GAF domain. A DNA-binding region (H-T-H motif) is located at residues 207 to 226 (ASVIADRIGITRSVIVNALR).

It belongs to the CodY family.

The protein localises to the cytoplasm. DNA-binding global transcriptional regulator which is involved in the adaptive response to starvation and acts by directly or indirectly controlling the expression of numerous genes in response to nutrient availability. During rapid exponential growth, CodY is highly active and represses genes whose products allow adaptation to nutrient depletion. This Streptococcus pneumoniae (strain ATCC BAA-255 / R6) protein is Global transcriptional regulator CodY.